A 720-amino-acid chain; its full sequence is Putative fatty acid oxidation complex trifunctional enzyme (720 aa).

Residues 1–384 form a 3-hydroxyacyl-CoA dehydrogenase region; the sequence is MQNEIKKVCV…SWKYGPFELL (384 aa). An enoyl-CoA hydratase/isomerase region spans residues 453–720; sequence FVITTKMNCL…TIEKLKAIVK (268 aa).

In the N-terminal section; belongs to the 3-hydroxyacyl-CoA dehydrogenase family. It in the C-terminal section; belongs to the enoyl-CoA hydratase/isomerase family.

It catalyses the reaction a (3S)-3-hydroxyacyl-CoA + NAD(+) = a 3-oxoacyl-CoA + NADH + H(+). The enzyme catalyses a (3S)-3-hydroxyacyl-CoA = a (2E)-enoyl-CoA + H2O. The catalysed reaction is a 4-saturated-(3S)-3-hydroxyacyl-CoA = a (3E)-enoyl-CoA + H2O. It carries out the reaction a (3Z)-enoyl-CoA = a 4-saturated (2E)-enoyl-CoA. It catalyses the reaction a (3E)-enoyl-CoA = a 4-saturated (2E)-enoyl-CoA. The polypeptide is Putative fatty acid oxidation complex trifunctional enzyme (Rickettsia felis (strain ATCC VR-1525 / URRWXCal2) (Rickettsia azadi)).